Here is an 819-residue protein sequence, read N- to C-terminus: Leucine--tRNA ligase (819 aa).

A 'HIGH' region motif is present at residues 42–53; it reads PYPSGAKLHIGH. Residues 578 to 582 carry the 'KMSKS' region motif; that stretch reads RMSKS. Lys-581 contacts ATP.

This sequence belongs to the class-I aminoacyl-tRNA synthetase family.

It localises to the cytoplasm. The catalysed reaction is tRNA(Leu) + L-leucine + ATP = L-leucyl-tRNA(Leu) + AMP + diphosphate. This is Leucine--tRNA ligase from Caldanaerobacter subterraneus subsp. tengcongensis (strain DSM 15242 / JCM 11007 / NBRC 100824 / MB4) (Thermoanaerobacter tengcongensis).